Consider the following 75-residue polypeptide: Defensin-like protein (75 aa).

The N-terminal stretch at 1–24 (MEKKSIAGLCFLFLVLFVAQEVVV) is a signal peptide. Intrachain disulfides connect Cys31–Cys75, Cys42–Cys63, Cys48–Cys69, and Cys52–Cys71.

Belongs to the DEFL family.

It is found in the secreted. Its function is as follows. This protein is required for germination. The protein is Defensin-like protein of Vigna unguiculata (Cowpea).